The following is a 400-amino-acid chain: Tyrosine-specific transport system 1 (400 aa).

12 consecutive transmembrane segments (helical) span residues 5–25 (VGSTLLVAGTMIGAGMLAMPL), 34–54 (FTLVLLLGLWALLTFSALLFV), 80–100 (IIATAVLIIFLYALIAAYISG), 117–137 (VSVLLFTVIFGSFIVIGTHSV), 143–163 (VLFFVMLAAFAVVLSLMLPEI), 176–196 (ALIISASPVFFTAFGFHGSIP), 211–231 (FSILVGSAITLCAYILWQLST), 250–270 (LNGLVKATFAITGSNVIASAV), 273–293 (FSTLALITSFLGVGLGLLECI), 313–333 (LTFIPPLVFALFYPEGFILAL), 335–355 (YAGQMFAFYAVVLPVSLVWKA), and 370–390 (NLTLIIVLVLGVLITSIPFAI).

The protein belongs to the amino acid/polyamine transporter 2 family. Mtr/TnaB/TyrP permease subfamily.

The protein resides in the cell inner membrane. The catalysed reaction is L-tyrosine(in) + H(+)(in) = L-tyrosine(out) + H(+)(out). Its function is as follows. Transports tyrosine across the cytoplasmic membrane. The transport system is energized by the proton motive force. This is Tyrosine-specific transport system 1 (tyrP-A) from Haemophilus influenzae (strain ATCC 51907 / DSM 11121 / KW20 / Rd).